We begin with the raw amino-acid sequence, 363 residues long: Ribosomal RNA large subunit methyltransferase M (363 aa).

S-adenosyl-L-methionine-binding positions include Ser-194, 227–230, Asp-246, Asp-266, and Asp-284; that span reads CPGG. Catalysis depends on Lys-313, which acts as the Proton acceptor.

It belongs to the class I-like SAM-binding methyltransferase superfamily. RNA methyltransferase RlmE family. RlmM subfamily. Monomer.

It localises to the cytoplasm. The catalysed reaction is cytidine(2498) in 23S rRNA + S-adenosyl-L-methionine = 2'-O-methylcytidine(2498) in 23S rRNA + S-adenosyl-L-homocysteine + H(+). In terms of biological role, catalyzes the 2'-O-methylation at nucleotide C2498 in 23S rRNA. The polypeptide is Ribosomal RNA large subunit methyltransferase M (Haemophilus influenzae (strain ATCC 51907 / DSM 11121 / KW20 / Rd)).